The chain runs to 617 residues: MGPVDTSQRLARLRELMQERKVDVYIVPSEDSHQSEYIAPCDGRREFISGFTGSAGCAIVSMSKAALSTDGRYFNQAAKQLDNNWMLLKRGFENMPTWQEWTAEQAEGGKVVGVDPSLITASEARSLSETIEKSGGSLQGVQENLIDLVWGKKRPARPSEKVALHPIEFAGKSFEEKISDLRKELQKKKSAGFVISMLDEIAWLFNLRGNDIPYNPVFFAYAIITPTTADLYIDDEKLPAEVKKYLGDQVSVKPYGSIFEDAKALSQSAQKKSDGDASTSPSEKFLISTKASWSLSLALGGEKNVEEVRSPITDAKAIKNEAELEGMRACHIRDGAALTEYFAWLENELVNKKTVLNEVDGSDKLEQIRSKHKHFVGLSFDTISSTGPNAAVIHYKAERDTCSIIDPKAVYLCDSGAQYLDGTTDTTRTLHFGEPTEMERKAYTLVLKGLISIDTAVFPKGTTGFALDAFARQHLWKEGLDYLHGTGHGVGSYLNVHEGPIGLGTRVQYAEVAITPGNVISDEPGFYEDGVFGIRIENIIIAKEVKTTHGFGEKPWLGFEHVTMTPLCQKLINPSLLTDGEKKWVNDYHSKVWEKTSSYFENDELTRNWLKRETQPI.

Residues aspartate 414, aspartate 425, glutamate 523, and glutamate 537 each coordinate Mn(2+).

Belongs to the peptidase M24B family. Requires Mn(2+) as cofactor.

It catalyses the reaction Release of any N-terminal amino acid, including proline, that is linked to proline, even from a dipeptide or tripeptide.. Its function is as follows. Catalyzes the removal of a penultimate prolyl residue from the N-termini of peptides. This Blastomyces gilchristii (strain SLH14081) (Blastomyces dermatitidis) protein is Probable Xaa-Pro aminopeptidase P (AMPP).